Here is a 1348-residue protein sequence, read N- to C-terminus: Adhesion G protein-coupled receptor F5 (1348 aa).

The signal sequence occupies residues 1 to 21 (MRSPRTFTFYFLLLVICSSEA). Over 22–1019 (ALSTPTEPIV…LKILLDIISY (998 aa)) the chain is Extracellular. In terms of domain architecture, SEA spans 163–271 (PEAFITLKLK…NSFQGTPSNE (109 aa)). Ig-like domains are found at residues 268–366 (PSNE…LDVT), 367–464 (PIRI…IAVT), and 469–559 (ANLT…KDVT). Residues Asn-270, Asn-286, Asn-337, and Asn-349 are each glycosylated (N-linked (GlcNAc...) asparagine). An intrachain disulfide couples Cys-291 to Cys-348. Cys-389 and Cys-447 are joined by a disulfide. Asn-470, Asn-538, and Asn-665 each carry an N-linked (GlcNAc...) asparagine glycan. Cys-490 and Cys-543 are joined by a disulfide. The residue at position 818 (Ser-818) is a Phosphoserine. The GAIN-B domain maps to 841–1005 (TPPFLAHPNV…SILMSPDSPD (165 aa)). Disulfide bonds link Cys-953–Cys-987 and Cys-972–Cys-989. The segment at 953 to 1005 (CVFWNFSLANNTGGWDSSGCSVEDDGRDNRDRVFCKCNHLTSFSILMSPDSPD) is GPS. A tethered agonist region spans residues 993–1008 (TSFSILMSPDSPDPGS). A helical membrane pass occupies residues 1020–1040 (IGLGFSIVSLAACLVVEAMVW). Residues 1041 to 1055 (KSVTKNRTSYMRHIC) are Cytoplasmic-facing. The helical transmembrane segment at 1056 to 1076 (IVNIAFCLLIADIWFIVAGAI) threads the bilayer. The Extracellular segment spans residues 1077–1092 (HDGRYPLNETACVAAT). The helical transmembrane segment at 1093 to 1113 (FFIHFFYLSVFFWMLTLGLML) threads the bilayer. Over 1114–1130 (FYRLIFILHDASKSTQK) the chain is Cytoplasmic. A helical transmembrane segment spans residues 1131-1151 (AIAFSLGYGCPLIISSITVGV). Topologically, residues 1152 to 1175 (TQPQEVYMRKNACWLNWEDTRALL) are extracellular. The helical transmembrane segment at 1176–1196 (AFAIPALIIVVVNVSITVVVI) threads the bilayer. Over 1197–1221 (TKILRPSIGDKPGKQEKSSLFQISK) the chain is Cytoplasmic. Residues 1222–1242 (SIGVLTPLLGLTWGFGLATVI) traverse the membrane as a helical segment. Over 1243–1250 (QGSNAVFH) the chain is Extracellular. The helical transmembrane segment at 1251–1271 (IIFTLLNAFQGLFILLFGCLW) threads the bilayer. Residues 1272-1348 (DQKVQEALLH…NSSSAYSLLN (77 aa)) are Cytoplasmic-facing. Thr-1302 is subject to Phosphothreonine. Residue Ser-1309 is modified to Phosphoserine. Residues 1328–1348 (STPETTSSSLENSSSAYSLLN) form a disordered region.

Belongs to the G-protein coupled receptor 2 family. Adhesion G-protein coupled receptor (ADGR) subfamily. Homodimer; disulfide-linked. Heterodimer of 2 chains generated by proteolytic processing; the large extracellular N-terminal fragment and the membrane-bound C-terminal fragment predominantly remain associated and non-covalently linked. Fragment generates by the processing enzyme furin remains attached to the extracellular N-terminal fragment. Interacts (via N-terminal extracellular domain) with SFTPD. Post-translationally, highly glycosylated. Proteolytically cleaved at multiple sites: one in the GPS region of the GAIN-B domain (S1 site) and the other in the SEA domain (S2 site). The proteolytic cleavage at S1 site generates an extracellular subunit and a seven-transmembrane subunit. The proteolytic cleavage at S2 site generates a fragment that undergoes proteolytic cleavage by the processing enzyme furin. In terms of tissue distribution, widely expressed, with highest levels in lung, pancreas, kidney and heart. In the kidney, expressed more abundantly in the medulla than in the cortex, predominantly expressed in A-intercalated cells (at protein level). Expressed in endothelial cells from various tissues, including brain, heart, kidney, liver, lung and muscle. In the lung, expressed in alveolar type II (ATII) cells (at protein level). Expressed in pancreatic islets of Langerhans, predominantly in delta cells, as well as in endothelial cells. Expressed in white adipose tissue.

It localises to the cell membrane. Its activity is regulated as follows. As an adhesion G protein-coupled receptor (aGPCR) exhibits a large N-terminal extracellular domain containing highly conserved GPCR autoproteolysis-inducing (GAIN) domain. During synthesis, intracellular autoproteolytic processing of nascent chain within the GAIN domain generates a mature protein, consisting of an N-terminal fragment that is non-covalently linked to the C-terminal fragment. The mature protein is routed to the plasma membrane where the N- and C-terminal fragments remain associated, forming the holoreceptor. Dissociation of the aGPCR fragments stimulates G protein signaling through the action of the tethered-peptide agonist stalk that is occluded within the GAIN domain in the holoreceptor form. This dissociation might be induced by ligand binding, such as that of sFNDC4. Its function is as follows. Adhesion G protein-coupled receptor. In alveolar type II (ATII or AT2) cells, required for normal lung surfactant homeostasis. Modulation of both surfactant secretion and uptake by ATII cells is mediated by the downstream activation of GNAQ/GNA11 proteins and may be a consequence of increased cortical F-actin assembly induced by ADGRF5 activation. In the kidney, may play a role in the regulation of acid excretion into the primary urine, possibly by regulating the surface expression of V-ATPase proton pump. As a receptor for soluble FNDC4 (sFNDC4), required for proper systemic glucose tolerance, specifically sensitizing white adipose tissue to insulin. Also plays a role in sFNDC4-induced decrease of local inflammation in white adipose tissue. The sequence is that of Adhesion G protein-coupled receptor F5 (Adgrf5) from Mus musculus (Mouse).